The primary structure comprises 158 residues: Transcription elongation factor GreA (158 aa).

Residues 10-76 adopt a coiled-coil conformation; it reads TLEGKKKLEE…QIEKMIRNAE (67 aa).

It belongs to the GreA/GreB family.

Necessary for efficient RNA polymerase transcription elongation past template-encoded arresting sites. The arresting sites in DNA have the property of trapping a certain fraction of elongating RNA polymerases that pass through, resulting in locked ternary complexes. Cleavage of the nascent transcript by cleavage factors such as GreA or GreB allows the resumption of elongation from the new 3'terminus. GreA releases sequences of 2 to 3 nucleotides. This Halalkalibacterium halodurans (strain ATCC BAA-125 / DSM 18197 / FERM 7344 / JCM 9153 / C-125) (Bacillus halodurans) protein is Transcription elongation factor GreA.